We begin with the raw amino-acid sequence, 643 residues long: RNA-binding protein MEX3D (643 aa).

Disordered stretches follow at residues 1-48 (MPGS…DAAA) and 61-92 (GLGG…APPD). Over residues 18–34 (TAGDPGHPHPALAGAED) the composition is skewed to low complexity. Positions 83–92 (CGEDEPAPPD) are enriched in acidic residues. KH domains lie at 160-221 (MTEC…KREI) and 253-314 (QTTI…REEI). 3 disordered regions span residues 357 to 427 (PHPG…GTAT), 471 to 505 (GAPA…GGLS), and 519 to 583 (VGAV…APGP). Residues 405–418 (GGSGNGGFTFGGDG) are compositionally biased toward gly residues. Phosphothreonine is present on Thr491. Phosphoserine is present on Ser495. Low complexity-rich tracts occupy residues 495–505 (SPTLPEPGGLS), 531–556 (LPPF…SSTL), and 567–583 (PSTT…APGP). Residues 592-632 (CVVCSEGEAMAALVPCGHNLFCMDCAVRICGKSEPECPACR) form an RING-type zinc finger.

The protein resides in the cytoplasm. It localises to the nucleus. Its function is as follows. RNA binding protein, may be involved in post-transcriptional regulatory mechanisms. The chain is RNA-binding protein MEX3D (Mex3d) from Mus musculus (Mouse).